The following is a 441-amino-acid chain: Glutamyl-tRNA reductase (441 aa).

Substrate contacts are provided by residues 49–52 (TCNR), Ser109, 114–116 (EDQ), and Gln120. The active-site Nucleophile is the Cys50. 190–195 (GAGKMS) is a binding site for NADP(+).

Belongs to the glutamyl-tRNA reductase family. Homodimer.

It catalyses the reaction (S)-4-amino-5-oxopentanoate + tRNA(Glu) + NADP(+) = L-glutamyl-tRNA(Glu) + NADPH + H(+). The protein operates within porphyrin-containing compound metabolism; protoporphyrin-IX biosynthesis; 5-aminolevulinate from L-glutamyl-tRNA(Glu): step 1/2. In terms of biological role, catalyzes the NADPH-dependent reduction of glutamyl-tRNA(Glu) to glutamate 1-semialdehyde (GSA). This chain is Glutamyl-tRNA reductase, found in Moorella thermoacetica (strain ATCC 39073 / JCM 9320).